A 745-amino-acid chain; its full sequence is Capsid protein (745 aa).

Disordered stretches follow at residues 23 to 44 (RRPLRRRRAGRPARRYRRRRTV), 598 to 619 (PCKTDGRPTDSDRHPRGIQVAD), and 660 to 700 (QPKR…EQAT). 2 stretches are compositionally biased toward basic and acidic residues: residues 599-612 (CKTDGRPTDSDRHP) and 675-691 (GEFREPEKGSYSEEERS).

The protein belongs to the anelloviridae capsid protein family.

Its subcellular location is the virion. Its function is as follows. Self assemble to form an icosahedral capsid. This is Capsid protein from Homo sapiens (Human).